Here is a 934-residue protein sequence, read N- to C-terminus: Phosphoenolpyruvate carboxylase (934 aa).

Residues His161 and Lys593 contribute to the active site.

Belongs to the PEPCase type 1 family. It depends on Mg(2+) as a cofactor.

The enzyme catalyses oxaloacetate + phosphate = phosphoenolpyruvate + hydrogencarbonate. In terms of biological role, forms oxaloacetate, a four-carbon dicarboxylic acid source for the tricarboxylic acid cycle. This chain is Phosphoenolpyruvate carboxylase (ppc), found in Mycobacterium leprae (strain TN).